Here is a 122-residue protein sequence, read N- to C-terminus: Large ribosomal subunit protein bL12 (122 aa).

Belongs to the bacterial ribosomal protein bL12 family. Homodimer. Part of the ribosomal stalk of the 50S ribosomal subunit. Forms a multimeric L10(L12)X complex, where L10 forms an elongated spine to which 2 to 4 L12 dimers bind in a sequential fashion. Binds GTP-bound translation factors.

Functionally, forms part of the ribosomal stalk which helps the ribosome interact with GTP-bound translation factors. Is thus essential for accurate translation. This is Large ribosomal subunit protein bL12 from Fusobacterium nucleatum subsp. nucleatum (strain ATCC 25586 / DSM 15643 / BCRC 10681 / CIP 101130 / JCM 8532 / KCTC 2640 / LMG 13131 / VPI 4355).